Here is a 100-residue protein sequence, read N- to C-terminus: Urease subunit gamma (100 aa).

The protein belongs to the urease gamma subunit family. As to quaternary structure, heterotrimer of UreA (gamma), UreB (beta) and UreC (alpha) subunits. Three heterotrimers associate to form the active enzyme.

The protein localises to the cytoplasm. It carries out the reaction urea + 2 H2O + H(+) = hydrogencarbonate + 2 NH4(+). The protein operates within nitrogen metabolism; urea degradation; CO(2) and NH(3) from urea (urease route): step 1/1. This is Urease subunit gamma from Lachnoclostridium phytofermentans (strain ATCC 700394 / DSM 18823 / ISDg) (Clostridium phytofermentans).